The following is a 103-amino-acid chain: Large ribosomal subunit protein uL24 (103 aa).

The protein belongs to the universal ribosomal protein uL24 family. In terms of assembly, part of the 50S ribosomal subunit.

Functionally, one of two assembly initiator proteins, it binds directly to the 5'-end of the 23S rRNA, where it nucleates assembly of the 50S subunit. One of the proteins that surrounds the polypeptide exit tunnel on the outside of the subunit. The sequence is that of Large ribosomal subunit protein uL24 from Exiguobacterium sibiricum (strain DSM 17290 / CCUG 55495 / CIP 109462 / JCM 13490 / 255-15).